The chain runs to 230 residues: Thymidylate kinase (230 aa).

20-27 (GGEGSGKS) serves as a coordination point for ATP.

The protein belongs to the thymidylate kinase family.

The catalysed reaction is dTMP + ATP = dTDP + ADP. Phosphorylation of dTMP to form dTDP in both de novo and salvage pathways of dTTP synthesis. The polypeptide is Thymidylate kinase (Nitrobacter hamburgensis (strain DSM 10229 / NCIMB 13809 / X14)).